The primary structure comprises 151 residues: UPF0208 membrane protein YfbV (151 aa).

The next 2 helical transmembrane spans lie at 46-65 (YAIR…QIAL) and 69-91 (LGPA…WWLG).

The protein belongs to the UPF0208 family.

The protein resides in the cell inner membrane. The polypeptide is UPF0208 membrane protein YfbV (Escherichia coli O1:K1 / APEC).